The sequence spans 380 residues: MSNPSPQVPEGEASTSVCRPKSSMASTSRRQRRERRFRRYLSAGRLVRAQALLQRHPGLDVDAGQPPPLHRACARHDAPALCLLLRLGADPAHQDRHGDTALHAAARQGPDAYTDFFLPLLSRCPSAMGIKNKDGETPGQILGWGPPWDSAEEEEEDEASKEREWRQKLQGELEDEWQEVIGRFEDDASHETQEPESFSAWSDRMAREHAQKRQQQRETEGACRPPRAEGSSHSWRQQEEEQRLFRERARAKEEELRESQARRAQEAPRDPVPEPARAGPRAEHPRGAGRGSLWRFGDVPWPCPGGGDPEAMAAALVARGPPLEEQGALRRYLRVQQVRWHPDRFLQRFRSQIETWELGRVMGAVTALSQALNRHAEALK.

Residues 1–34 (MSNPSPQVPEGEASTSVCRPKSSMASTSRRQRRE) are disordered. The span at 13–28 (ASTSVCRPKSSMASTS) shows a compositional bias: polar residues. ANK repeat units lie at residues 64–93 (GQPPPLHRACARHDAPALCLLLRLGADPAH) and 97–133 (HGDTALHAAARQGPDAYTDFFLPLLSRCPSAMGIKNK). Disordered stretches follow at residues 131-167 (KNKDGETPGQILGWGPPWDSAEEEEEDEASKEREWRQ) and 185-293 (EDDA…RGSL). Phosphoserine is present on S150. Acidic residues predominate over residues 150 to 159 (SAEEEEEDEA). Basic and acidic residues-rich tracts occupy residues 204–221 (RMAREHAQKRQQQRETEG) and 236–272 (RQQEEEQRLFRERARAKEEELRESQARRAQEAPRDPV).

Interacts with CACTIN (via N-terminal domain); the interaction occurs in a pro-inflammatory-independent manner.

The protein resides in the nucleus. Functionally, involved in the regulation of innate immune response. Acts as negative regulator of Toll-like receptor and interferon-regulatory factor (IRF) signaling pathways. Contributes to the negative regulation of transcriptional activation of NF-kappa-B target genes in response to endogenous pro-inflammatory stimuli. This Sus scrofa (Pig) protein is NF-kappa-B inhibitor-like protein 1 (NFKBIL1).